The sequence spans 333 residues: D-fructose 1,6-bisphosphatase class 2/sedoheptulose 1,7-bisphosphatase (333 aa).

Residues Asp-33, Glu-57, Asp-85, and Glu-88 each coordinate Mn(2+). Residues 88-90 (EGT), Tyr-119, 164-166 (RTR), and 186-188 (DGD) contribute to the substrate site. Residue Glu-213 coordinates Mn(2+).

The protein belongs to the FBPase class 2 family. In terms of assembly, homotetramer. Requires Mn(2+) as cofactor.

It catalyses the reaction beta-D-fructose 1,6-bisphosphate + H2O = beta-D-fructose 6-phosphate + phosphate. The catalysed reaction is D-sedoheptulose 1,7-bisphosphate + H2O = D-sedoheptulose 7-phosphate + phosphate. It functions in the pathway carbohydrate biosynthesis; Calvin cycle. Functionally, catalyzes the hydrolysis of fructose 1,6-bisphosphate (Fru 1,6-P2) and sedoheptulose 1,7-bisphosphate (Sed 1,7-P2) to fructose 6-phosphate and sedoheptulose 7-phosphate, respectively. This is D-fructose 1,6-bisphosphatase class 2/sedoheptulose 1,7-bisphosphatase from Prochlorococcus marinus (strain AS9601).